We begin with the raw amino-acid sequence, 452 residues long: Gastrin/cholecystokinin type B receptor (452 aa).

Residues 1-55 (MELVKLNRSVQGSGPVASLCRPGGPLLNNSGTGNLSCEPPRIRGAGTRELELAIR) are Extracellular-facing. N-linked (GlcNAc...) asparagine glycosylation is found at Asn7, Asn28, and Asn34. Residues 56-77 (VTLYAVIFLMSVGGNILIIVVL) traverse the membrane as a helical segment. The Cytoplasmic segment spans residues 78 to 85 (GLSRRLRT). A helical membrane pass occupies residues 86–107 (VTNAFLLSLAVSDLLLAVACMP). Topologically, residues 108-129 (FTLLPNLMGTFIFGTVICKAVS) are extracellular. An intrachain disulfide couples Cys125 to Cys203. The helical transmembrane segment at 130–148 (YLMGVSVSVSTLSLVAIAL) threads the bilayer. At 149–168 (ERYSAICRPLQARVWQTRSH) the chain is on the cytoplasmic side. Residues 169–187 (AARVILATWLLSGLLMVPY) traverse the membrane as a helical segment. Residues 188–217 (PVYTAVQPVGPRVLQCVHRWPSARVRQTWS) are Extracellular-facing. The chain crosses the membrane as a helical span at residues 218 to 240 (VLLLLLLFFVPGVVMAVAYGLIS). Over 241–338 (RELYLGLRFD…KLLAKKRVVR (98 aa)) the chain is Cytoplasmic. A disordered region spans residues 255–285 (SESQSRVRGQGGLPGGAAPGPVHQNGRCRPE). Gly residues predominate over residues 263–272 (GQGGLPGGAA). Residues 339–360 (MLLVIVVLFFMCWLPVYSANTW) traverse the membrane as a helical segment. Over 361–378 (RAFDGPGAHRALSGAPIS) the chain is Extracellular. The helical transmembrane segment at 379–399 (FIHLLSYASACVNPLVYCFMH) threads the bilayer. Residues 400-452 (RRFRQACLDTCARCCPRPPRARPRPLPDEDPPTPSIASLSRLSYTTISTLGPG) are Cytoplasmic-facing. Cys413 is lipidated: S-palmitoyl cysteine.

Belongs to the G-protein coupled receptor 1 family.

The protein resides in the cell membrane. Its function is as follows. Receptor for gastrin and cholecystokinin. The CCK-B receptors occur throughout the central nervous system where they modulate anxiety, analgesia, arousal, and neuroleptic activity. This receptor mediates its action by association with G proteins that activate a phosphatidylinositol-calcium second messenger system. In Oryctolagus cuniculus (Rabbit), this protein is Gastrin/cholecystokinin type B receptor (CCKBR).